We begin with the raw amino-acid sequence, 535 residues long: CTP synthase (535 aa).

Residues 1–267 form an amidoligase domain region; it reads MTKFIFVTGG…DDIVIQRLQL (267 aa). Residue Ser13 coordinates CTP. Residue Ser13 participates in UTP binding. ATP is bound at residue 14 to 19; it reads SLGKGI. Position 54 (Tyr54) interacts with L-glutamine. ATP is bound at residue Asp71. The Mg(2+) site is built by Asp71 and Glu141. CTP is bound by residues 148–150, 188–193, and Lys224; these read DIE and KTKPTQ. Residues 188-193 and Lys224 each bind UTP; that span reads KTKPTQ. An ATP-binding site is contributed by 240-242; sequence RDA. The Glutamine amidotransferase type-1 domain maps to 293-535; sequence TIGLVGKYVS…VEAALNYQQK (243 aa). Gly355 is an L-glutamine binding site. Catalysis depends on Cys382, which acts as the Nucleophile; for glutamine hydrolysis. Residues 383–386, Glu406, and Arg463 each bind L-glutamine; that span reads LGMQ. Active-site residues include His508 and Glu510.

Belongs to the CTP synthase family. As to quaternary structure, homotetramer.

It catalyses the reaction UTP + L-glutamine + ATP + H2O = CTP + L-glutamate + ADP + phosphate + 2 H(+). It carries out the reaction L-glutamine + H2O = L-glutamate + NH4(+). The enzyme catalyses UTP + NH4(+) + ATP = CTP + ADP + phosphate + 2 H(+). Its pathway is pyrimidine metabolism; CTP biosynthesis via de novo pathway; CTP from UDP: step 2/2. Its activity is regulated as follows. Allosterically activated by GTP, when glutamine is the substrate; GTP has no effect on the reaction when ammonia is the substrate. The allosteric effector GTP functions by stabilizing the protein conformation that binds the tetrahedral intermediate(s) formed during glutamine hydrolysis. Inhibited by the product CTP, via allosteric rather than competitive inhibition. In terms of biological role, catalyzes the ATP-dependent amination of UTP to CTP with either L-glutamine or ammonia as the source of nitrogen. Regulates intracellular CTP levels through interactions with the four ribonucleotide triphosphates. The protein is CTP synthase of Staphylococcus epidermidis (strain ATCC 35984 / DSM 28319 / BCRC 17069 / CCUG 31568 / BM 3577 / RP62A).